We begin with the raw amino-acid sequence, 715 residues long: Lactococcin transport/processing ATP-binding protein LcnC-like (715 aa).

Residues 11-138 (QVDEMDCGCA…SEWTGISLFL (128 aa)) form the Peptidase C39 domain. Cys-17 is an active-site residue. 5 helical membrane-spanning segments follow: residues 167 to 187 (VILN…LGSY), 197 to 217 (IPNA…LTYI), 237 to 257 (LAID…MSFF), 282 to 302 (TILS…ILGL), and 307 to 327 (LFLL…IFTP). Residues 168–450 (ILNIVIASFI…IINLQTKLQK (283 aa)) form the ABC transmembrane type-1 domain. Positions 482–715 (LNMSEISYQY…NGFYAQLYHN (234 aa)) constitute an ABC transporter domain. 515–522 (GISGSGKS) lines the ATP pocket.

It belongs to the ABC transporter superfamily. HlyB family.

It localises to the cell membrane. Involved in the export process of a bacteriocin lactococcin. The polypeptide is Lactococcin transport/processing ATP-binding protein LcnC-like (lcnC) (Lactococcus lactis subsp. lactis (strain IL1403) (Streptococcus lactis)).